A 194-amino-acid chain; its full sequence is Putative L,D-transpeptidase YciB (194 aa).

An N-terminal signal peptide occupies residues 1 to 19; it reads MKLSLFIIAVLMPVILLSA. Cys-20 is lipidated: N-palmitoyl cysteine. Cys-20 carries the S-diacylglycerol cysteine lipid modification. In terms of domain architecture, L,D-TPase catalytic spans 68 to 194; the sequence is VWIDVNVKEQ…IPEHTKVVIS (127 aa). Residue His-144 is the Proton donor/acceptor of the active site. The active-site Nucleophile is Cys-170.

The protein belongs to the YkuD family.

The protein localises to the cell membrane. The protein operates within cell wall biogenesis; peptidoglycan biosynthesis. The sequence is that of Putative L,D-transpeptidase YciB (yciB) from Bacillus subtilis (strain 168).